A 182-amino-acid chain; its full sequence is Ribulose bisphosphate carboxylase small subunit, chloroplastic (182 aa).

The transit peptide at 1-58 directs the protein to the chloroplast; it reads MASSMISSATIATVNCSSPAQANMVAPFTGLKSASAFPVTRKANNDITSLASNGGRVQ.

This sequence belongs to the RuBisCO small chain family. Heterohexadecamer of 8 large and 8 small subunits.

The protein resides in the plastid. It localises to the chloroplast. RuBisCO catalyzes two reactions: the carboxylation of D-ribulose 1,5-bisphosphate, the primary event in carbon dioxide fixation, as well as the oxidative fragmentation of the pentose substrate. Both reactions occur simultaneously and in competition at the same active site. Although the small subunit is not catalytic it is essential for maximal activity. This Gossypium hirsutum (Upland cotton) protein is Ribulose bisphosphate carboxylase small subunit, chloroplastic.